A 422-amino-acid polypeptide reads, in one-letter code: MLELKFVRNNPDIVGRALISRNMGTELIDSLLEYDAAWRECLIEGDDLKHKRNVVTREIAQLKKENKDAASRINEMQGINSRIKELDDKIRDYKSKINEIMLSIPNIPSETTPVGKDENDNPVVRVVGEPREFTFTPKPHWEIGESLDILDFERAAKISGQGFAVYKGMGAKLERALINFMLDVHTRQGYLEVFPPVLINEKAMTGTGQLPKFKDDMYGCTDGFYLAPTAEVPVTNLFMDEYMENLPVFLTAYTACFRREAGKHGQDTRGIIRNHQFNKVELVKFVMPETSYEELEKLTLDAEEILKLLKLPYRVVSLCTGDLGFSAAKTYDLEVWVPTQEKYREISSCSNFDNFQARRANIRYRTPEGPQFVHTLNGSGLAVGRTVVAILENYQREDGSVEIPEVLRPYMGGAEEIRKVCH.

L-serine is bound at residue 229–231 (TAE). Residue 258-260 (RRE) participates in ATP binding. L-serine is bound at residue Glu-281. 345–348 (EISS) serves as a coordination point for ATP. Ser-379 is a binding site for L-serine.

Belongs to the class-II aminoacyl-tRNA synthetase family. Type-1 seryl-tRNA synthetase subfamily. In terms of assembly, homodimer. The tRNA molecule binds across the dimer.

The protein localises to the cytoplasm. The enzyme catalyses tRNA(Ser) + L-serine + ATP = L-seryl-tRNA(Ser) + AMP + diphosphate + H(+). It carries out the reaction tRNA(Sec) + L-serine + ATP = L-seryl-tRNA(Sec) + AMP + diphosphate + H(+). The protein operates within aminoacyl-tRNA biosynthesis; selenocysteinyl-tRNA(Sec) biosynthesis; L-seryl-tRNA(Sec) from L-serine and tRNA(Sec): step 1/1. In terms of biological role, catalyzes the attachment of serine to tRNA(Ser). Is also able to aminoacylate tRNA(Sec) with serine, to form the misacylated tRNA L-seryl-tRNA(Sec), which will be further converted into selenocysteinyl-tRNA(Sec). The polypeptide is Serine--tRNA ligase (Methanosarcina mazei (strain ATCC BAA-159 / DSM 3647 / Goe1 / Go1 / JCM 11833 / OCM 88) (Methanosarcina frisia)).